The primary structure comprises 235 residues: Phosphoribosylaminoimidazole-succinocarboxamide synthase (235 aa).

It belongs to the SAICAR synthetase family.

The enzyme catalyses 5-amino-1-(5-phospho-D-ribosyl)imidazole-4-carboxylate + L-aspartate + ATP = (2S)-2-[5-amino-1-(5-phospho-beta-D-ribosyl)imidazole-4-carboxamido]succinate + ADP + phosphate + 2 H(+). It functions in the pathway purine metabolism; IMP biosynthesis via de novo pathway; 5-amino-1-(5-phospho-D-ribosyl)imidazole-4-carboxamide from 5-amino-1-(5-phospho-D-ribosyl)imidazole-4-carboxylate: step 1/2. The sequence is that of Phosphoribosylaminoimidazole-succinocarboxamide synthase from Clostridium kluyveri (strain NBRC 12016).